The sequence spans 54 residues: Small ribosomal subunit protein uS14 (54 aa).

Residues Cys-19, Cys-22, Cys-37, and Cys-40 each coordinate Zn(2+).

The protein belongs to the universal ribosomal protein uS14 family. Zinc-binding uS14 subfamily. In terms of assembly, part of the 30S ribosomal subunit. It depends on Zn(2+) as a cofactor.

Its function is as follows. Binds 16S rRNA, required for the assembly of 30S particles. The protein is Small ribosomal subunit protein uS14 of Aeropyrum pernix (strain ATCC 700893 / DSM 11879 / JCM 9820 / NBRC 100138 / K1).